A 214-amino-acid chain; its full sequence is Vascular endothelial growth factor A (214 aa).

The first 26 residues, 1 to 26 (MNFLLSWVHWSLALLLYLHHAKWSQA), serve as a signal peptide directing secretion. Intrachain disulfides connect Cys-51/Cys-93, Cys-82/Cys-127, and Cys-86/Cys-129. N-linked (GlcNAc...) asparagine glycosylation is present at Asn-100. Residues 131 to 142 (PKKDRARQEKKS) show a composition bias toward basic and acidic residues. The interval 131–162 (PKKDRARQEKKSIRGKGKGQKRKRKKSRYKPW) is disordered. Over residues 143–159 (IRGKGKGQKRKRKKSRY) the composition is skewed to basic residues.

This sequence belongs to the PDGF/VEGF growth factor family. Homodimer; disulfide-linked. Also found as heterodimer with PGF. Interacts with NRP1. Interacts with BSG. Interacts with CD82; this interaction inhibits VEGFA-mediated signaling pathway.

The protein localises to the secreted. Its function is as follows. Growth factor active in angiogenesis, vasculogenesis and endothelial cell growth. Induces endothelial cell proliferation, promotes cell migration, inhibits apoptosis and induces permeabilization of blood vessels. Binds to the FLT1/VEGFR1 and KDR/VEGFR2 receptors, heparan sulfate and heparin. Binding to NRP1 receptor initiates a signaling pathway needed for motor neuron axon guidance and cell body migration, including for the caudal migration of facial motor neurons from rhombomere 4 to rhombomere 6 during embryonic development. Also binds the DEAR/FBXW7-AS1 receptor. The protein is Vascular endothelial growth factor A (VEGFA) of Canis lupus familiaris (Dog).